Consider the following 431-residue polypeptide: 5'-deoxyadenosine deaminase (431 aa).

Zn(2+) contacts are provided by His-65 and His-67. Positions 94 and 185 each coordinate substrate. His-212 lines the Zn(2+) pocket. Residues Glu-215 and Asp-300 each coordinate substrate. Asp-300 serves as a coordination point for Zn(2+).

This sequence belongs to the metallo-dependent hydrolases superfamily. MTA/SAH deaminase family. Homotetramer. Requires Zn(2+) as cofactor.

The catalysed reaction is 5'-deoxyadenosine + H2O + H(+) = 5'-deoxyinosine + NH4(+). The enzyme catalyses S-adenosyl-L-homocysteine + H2O + H(+) = S-inosyl-L-homocysteine + NH4(+). It catalyses the reaction S-methyl-5'-thioadenosine + H2O + H(+) = S-methyl-5'-thioinosine + NH4(+). It carries out the reaction adenosine + H2O + H(+) = inosine + NH4(+). The protein operates within amino-acid biosynthesis; S-adenosyl-L-methionine biosynthesis. Functionally, catalyzes the deamination of three SAM-derived enzymatic products, namely 5'-deoxyadenosine, S-adenosyl-L-homocysteine, and 5'-methylthioadenosine, to produce the inosine analogs. Can also deaminate adenosine. The preferred substrate for this enzyme is 5'-deoxyadenosine, but all these substrates are efficiently deaminated. Likely functions in a S-adenosyl-L-methionine (SAM) recycling pathway from S-adenosyl-L-homocysteine (SAH) produced from SAM-dependent methylation reactions. May also be involved in the recycling of 5'-deoxyadenosine, whereupon the 5'-deoxyribose moiety of 5'-deoxyinosine is further metabolized to deoxyhexoses used for the biosynthesis of aromatic amino acids in methanogens. The protein is 5'-deoxyadenosine deaminase of Methanopyrus kandleri (strain AV19 / DSM 6324 / JCM 9639 / NBRC 100938).